We begin with the raw amino-acid sequence, 353 residues long: 3'(2'),5'-bisphosphate nucleotidase (353 aa).

The active-site Proton acceptor is aspartate 50. 4 residues coordinate Mg(2+): glutamate 73, aspartate 136, isoleucine 138, and aspartate 139. Residue threonine 141 is the Proton acceptor of the active site. Adenosine 3',5'-bisphosphate contacts are provided by threonine 141, histidine 232, serine 256, lysine 259, arginine 273, and aspartate 286. Residues histidine 232, serine 256, lysine 259, arginine 273, and aspartate 286 each contribute to the AMP site. Aspartate 286 contacts Mg(2+).

This sequence belongs to the inositol monophosphatase superfamily. The cofactor is Mg(2+).

It carries out the reaction 3'-phosphoadenylyl sulfate + H2O = adenosine 5'-phosphosulfate + phosphate. The catalysed reaction is adenosine 3',5'-bisphosphate + H2O = AMP + phosphate. It catalyses the reaction adenosine 2',5'-bisphosphate + H2O = AMP + phosphate. The enzyme catalyses 1D-myo-inositol 1,4-bisphosphate + H2O = 1D-myo-inositol 4-phosphate + phosphate. It carries out the reaction 1D-myo-inositol 1,3,4-trisphosphate + H2O = 1D-myo-inositol 3,4-bisphosphate + phosphate. Inhibited by Li(+) and Na(+). Phosphatase that converts adenosine 3'-phosphate 5'-phosphosulfate (PAPS) to adenosine 5'-phosphosulfate (APS) and 3'(2')-phosphoadenosine 5'-phosphate (PAP) to AMP. May regulate the flux of sulfur in the sulfur-activation pathway by converting PAPS to APS. Is also able to hydrolyze inositol 1,4-bisphosphate (Ins(1,4)P2) and inositol 1,3,4-trisphosphate (Ins(1,3,4)P3), but is not active on inositol 1,4,5-trisphosphate, inositol 1-phosphate, fructose 1,6-bisphosphate, AMP and ATP. Functionally, confers resistance to lithium. In Schizosaccharomyces pombe (strain 972 / ATCC 24843) (Fission yeast), this protein is 3'(2'),5'-bisphosphate nucleotidase (tol1).